The primary structure comprises 143 residues: Turripeptide VIII-01 (143 aa).

The signal sequence occupies residues 1-23; that stretch reads MALSLDILMSVTMVTAVLTTVNA. Residues 24–32 constitute a propeptide that is removed on maturation; sequence EYKDSRLDS.

In terms of processing, contains 4 disulfide bonds. In terms of tissue distribution, expressed by the venom duct.

It is found in the secreted. The sequence is that of Turripeptide VIII-01 from Gemmula speciosa (Splendid gem-turris).